The following is a 337-amino-acid chain: Large ribosomal subunit protein uL3 (337 aa).

Positions 1–20 (MASIHRPKRGSLAFSPRKRA) are disordered.

The protein belongs to the universal ribosomal protein uL3 family. In terms of assembly, part of the 50S ribosomal subunit. Forms a cluster with proteins L14 and L24e.

Functionally, one of the primary rRNA binding proteins, it binds directly near the 3'-end of the 23S rRNA, where it nucleates assembly of the 50S subunit. The sequence is that of Large ribosomal subunit protein uL3 from Methanosarcina mazei (strain ATCC BAA-159 / DSM 3647 / Goe1 / Go1 / JCM 11833 / OCM 88) (Methanosarcina frisia).